Reading from the N-terminus, the 183-residue chain is Anterior gradient protein 1 (183 aa).

Positions methionine 1 to glycine 18 are cleaved as a signal peptide.

The protein belongs to the AGR family. As to expression, from stage 18 (neurula) onward, expressed in the cement gland until it degenerates. More weakly expressed in the adjacent hatching gland.

It is found in the secreted. Does not appear to be required for cement gland formation. The chain is Anterior gradient protein 1 (ag1) from Xenopus laevis (African clawed frog).